A 305-amino-acid chain; its full sequence is Uridylate cyclase (305 aa).

Residues aspartate 58 and aspartate 102 each coordinate Mn(2+).

Belongs to the adenylyl cyclase class-4/guanylyl cyclase family. Pyrimidine cyclase subfamily. As to quaternary structure, homodimer. The cofactor is Mn(2+).

It localises to the cytoplasm. The catalysed reaction is GTP = 3',5'-cyclic GMP + diphosphate. It carries out the reaction UTP = 3',5'-cyclic UMP + diphosphate. In terms of biological role, pycsar (pyrimidine cyclase system for antiphage resistance) provides immunity against bacteriophage. The pyrimidine cyclase (PycC) synthesizes cyclic nucleotides in response to infection; these serve as specific second messenger signals. The signals activate the adjacent effector, leading to bacterial cell death and abortive phage infection. A clade D Pycsar system. Functionally, the pyrimidine cyclase gene of a two-gene Pycsar system, generates cyclic UMP (cUMP) from UTP as well as cGMP from GTP to a lesser extent, has little to no activity on ATP or CTP. Expression of this and adjacent effector MePycTM (AC A0A1C5G2D0) probably confers resistance to bacteriophage. The genes are probably only expressed in response to bacteriophage infection. This Micromonospora echinofusca protein is Uridylate cyclase.